The primary structure comprises 152 residues: FAD synthase (152 aa).

ATP contacts are provided by residues 9 to 10 (TF), 14 to 17 (HPGH), and D92.

It belongs to the archaeal FAD synthase family. As to quaternary structure, homodimer. A divalent metal cation is required as a cofactor.

The enzyme catalyses FMN + ATP + H(+) = FAD + diphosphate. The protein operates within cofactor biosynthesis; FAD biosynthesis; FAD from FMN: step 1/1. Its function is as follows. Catalyzes the transfer of the AMP portion of ATP to flavin mononucleotide (FMN) to produce flavin adenine dinucleotide (FAD) coenzyme. The protein is FAD synthase of Ferroglobus placidus (strain DSM 10642 / AEDII12DO).